Reading from the N-terminus, the 380-residue chain is Queuine tRNA-ribosyltransferase (380 aa).

Aspartate 96 serves as the catalytic Proton acceptor. Substrate contacts are provided by residues 96-100, aspartate 150, glutamine 193, and glycine 220; that span reads DSGGF. The segment at 251-257 is RNA binding; the sequence is GVGAPDS. The Nucleophile role is filled by aspartate 270. The interval 275 to 279 is RNA binding; important for wobble base 34 recognition; sequence TRIAR. Residues cysteine 308, cysteine 310, cysteine 313, and histidine 339 each coordinate Zn(2+).

Belongs to the queuine tRNA-ribosyltransferase family. As to quaternary structure, homodimer. Within each dimer, one monomer is responsible for RNA recognition and catalysis, while the other monomer binds to the replacement base PreQ1. Zn(2+) is required as a cofactor.

It catalyses the reaction 7-aminomethyl-7-carbaguanine + guanosine(34) in tRNA = 7-aminomethyl-7-carbaguanosine(34) in tRNA + guanine. It participates in tRNA modification; tRNA-queuosine biosynthesis. In terms of biological role, catalyzes the base-exchange of a guanine (G) residue with the queuine precursor 7-aminomethyl-7-deazaguanine (PreQ1) at position 34 (anticodon wobble position) in tRNAs with GU(N) anticodons (tRNA-Asp, -Asn, -His and -Tyr). Catalysis occurs through a double-displacement mechanism. The nucleophile active site attacks the C1' of nucleotide 34 to detach the guanine base from the RNA, forming a covalent enzyme-RNA intermediate. The proton acceptor active site deprotonates the incoming PreQ1, allowing a nucleophilic attack on the C1' of the ribose to form the product. After dissociation, two additional enzymatic reactions on the tRNA convert PreQ1 to queuine (Q), resulting in the hypermodified nucleoside queuosine (7-(((4,5-cis-dihydroxy-2-cyclopenten-1-yl)amino)methyl)-7-deazaguanosine). The polypeptide is Queuine tRNA-ribosyltransferase (Streptococcus thermophilus (strain ATCC BAA-491 / LMD-9)).